The chain runs to 79 residues: Small ribosomal subunit protein bS18 (79 aa).

The protein belongs to the bacterial ribosomal protein bS18 family. In terms of assembly, part of the 30S ribosomal subunit. Forms a tight heterodimer with protein bS6.

Binds as a heterodimer with protein bS6 to the central domain of the 16S rRNA, where it helps stabilize the platform of the 30S subunit. This is Small ribosomal subunit protein bS18 from Ureaplasma parvum serovar 3 (strain ATCC 27815 / 27 / NCTC 11736).